A 163-amino-acid chain; its full sequence is Nucleotide-binding protein Acel_0286 (163 aa).

Belongs to the YajQ family.

Functionally, nucleotide-binding protein. In Acidothermus cellulolyticus (strain ATCC 43068 / DSM 8971 / 11B), this protein is Nucleotide-binding protein Acel_0286.